The sequence spans 403 residues: uncharacterized protein (403 aa).

12 helical membrane passes run 25 to 47, 62 to 81, 88 to 110, 114 to 136, 143 to 165, 175 to 197, 229 to 251, 256 to 278, 290 to 307, 311 to 330, 350 to 372, and 376 to 398; these read IAFFLAGFSTFSTLYCVQPILFL, SLSASTAMMAFGMLFTGPLS, VVMSSSLFLASFCTFCCSNMNSW, IFMRALTGLALSGVAAVAMTYLS, VLSFSIGLYISGNTIGGFLGRFL, WNIALEFISFLAFTSAVLFVYLL, LFFMGCILMGSFITLFNYVGYRL, FFLGQTTIGLLSIIYLIGVYSSP, GVILTLALTMMIFGVLIT, IVLLIIVGLTLFAAGFFAAH, SIYLFSYYLGSSIFGTFSGIFWI, and WLGISIFIITFLCIGILLSIRLL.

This sequence belongs to the major facilitator superfamily.

Its subcellular location is the cell membrane. This is an uncharacterized protein from Buchnera aphidicola subsp. Baizongia pistaciae (strain Bp).